A 151-amino-acid polypeptide reads, in one-letter code: Protein INO4 (151 aa).

A bHLH domain is found at 45 to 97 (QIRINHVSSEKKRRELERAIFDELVAVVPDLQPQESRSELIIYLKSLSYLSWL). The disordered stretch occupies residues 112–137 (HEAKTGSSSSSDPVQEQNGNIRDLVP). Residues 116–131 (TGSSSSSDPVQEQNGN) show a composition bias toward polar residues.

Efficient DNA binding requires dimerization with another bHLH protein.

The protein localises to the nucleus. Transcriptional activator of phospholipid synthetic genes (such as INO1, CHO1/PSS, CHO2/PEM1, OPI3/PEM2, etc.). This chain is Protein INO4 (INO4), found in Saccharomyces cerevisiae (strain ATCC 204508 / S288c) (Baker's yeast).